A 182-amino-acid chain; its full sequence is Putative pre-16S rRNA nuclease (182 aa).

The protein belongs to the YqgF nuclease family.

The protein localises to the cytoplasm. Could be a nuclease involved in processing of the 5'-end of pre-16S rRNA. The protein is Putative pre-16S rRNA nuclease of Corynebacterium glutamicum (strain ATCC 13032 / DSM 20300 / JCM 1318 / BCRC 11384 / CCUG 27702 / LMG 3730 / NBRC 12168 / NCIMB 10025 / NRRL B-2784 / 534).